A 164-amino-acid chain; its full sequence is MSITFGELVGNFILVTGSVIVLLLLIKKFAWGAIESILQTRSQQISRDIDQAEQSRLSAQQLEAKSQANLDASRSQASKIISDAKEIGQLQGDKLVAEATDEAKRLKEKALTDIEQSKSDAISAVKTEMSDLTVLLAKKIMGANLDKTAQSQLIDSYLDDLGEA.

A helical transmembrane segment spans residues 6 to 26; it reads GELVGNFILVTGSVIVLLLLI.

This sequence belongs to the ATPase B chain family. F-type ATPases have 2 components, F(1) - the catalytic core - and F(0) - the membrane proton channel. F(1) has five subunits: alpha(3), beta(3), gamma(1), delta(1), epsilon(1). F(0) has three main subunits: a(1), b(2) and c(10-14). The alpha and beta chains form an alternating ring which encloses part of the gamma chain. F(1) is attached to F(0) by a central stalk formed by the gamma and epsilon chains, while a peripheral stalk is formed by the delta and b chains.

It localises to the cell membrane. Its function is as follows. F(1)F(0) ATP synthase produces ATP from ADP in the presence of a proton or sodium gradient. F-type ATPases consist of two structural domains, F(1) containing the extramembraneous catalytic core and F(0) containing the membrane proton channel, linked together by a central stalk and a peripheral stalk. During catalysis, ATP synthesis in the catalytic domain of F(1) is coupled via a rotary mechanism of the central stalk subunits to proton translocation. Component of the F(0) channel, it forms part of the peripheral stalk, linking F(1) to F(0). The protein is ATP synthase subunit b of Streptococcus pyogenes serotype M3 (strain ATCC BAA-595 / MGAS315).